The primary structure comprises 568 residues: 4-hydroxy-7-methoxy-3-oxo-3,4-dihydro-2H-1,4-benzoxazin-2-yl glucoside beta-D-glucosidase, chloroplastic (568 aa).

The N-terminal 50 residues, 1–50, are a transit peptide targeting the chloroplast; it reads MALLVGGTLNPTTHLSLRSRAGRNSENVWLRSAASSQTSKGRFCNLTVRA. A beta-D-glucoside is bound by residues Gln92, His194, and 239 to 240; that span reads NE. Residue Glu240 is the Proton donor of the active site. Residues Cys259 and Cys265 are joined by a disulfide bond. A beta-D-glucoside contacts are provided by residues Tyr383, Glu456, Trp504, 511–512, and Phe520; that span reads EW. Glu456 (nucleophile) is an active-site residue.

It belongs to the glycosyl hydrolase 1 family. Homohexamer. In terms of tissue distribution, expressed in seedlings, mesocotyl, coleoptile, leaf sheath, and roots.

Its subcellular location is the plastid. It localises to the chloroplast. The enzyme catalyses DIMBOA beta-D-glucoside + H2O = DIMBOA + D-glucose. The catalysed reaction is DIBOA beta-D-glucoside + H2O = DIBOA + D-glucose. It catalyses the reaction Hydrolysis of terminal, non-reducing beta-D-glucosyl residues with release of beta-D-glucose.. Its activity is regulated as follows. Inhibited by castanospermine, Ag(+) and Cu(2+). 34% inhibition by Zn(2+) and not affected by EDTA. Involved in defense of young plant parts against pests via the production of benzoxazolinones (hydroxamic acids) from hydroxamic acid glucosides. The preferred substrate is DIBOA-beta-D-glucoside. Can also use esculin and genistein glucoside as substrates, but no activity with salicin, p-nitrophenyl-alpha-glucoside or substrates related to cell wall components. This is 4-hydroxy-7-methoxy-3-oxo-3,4-dihydro-2H-1,4-benzoxazin-2-yl glucoside beta-D-glucosidase, chloroplastic from Secale cereale (Rye).